We begin with the raw amino-acid sequence, 143 residues long: Transcriptional regulator MraZ (143 aa).

SpoVT-AbrB domains are found at residues Glu-5 to Glu-47 and Ala-76 to Arg-119.

Belongs to the MraZ family. As to quaternary structure, forms oligomers.

It is found in the cytoplasm. It localises to the nucleoid. In Limosilactobacillus fermentum (strain NBRC 3956 / LMG 18251) (Lactobacillus fermentum), this protein is Transcriptional regulator MraZ.